The primary structure comprises 565 residues: DNA repair protein RAD7 (565 aa).

2 disordered regions span residues 1 to 22 (MYRS…PNSA) and 41 to 68 (WYQR…FTAE). Residues 1-200 (MYRSRNRPKR…SKLVFNKLRD (200 aa)) form a hydrophilic region. Residues 47 to 62 (KKQEDATDEKKGKAED) are compositionally biased toward basic and acidic residues. A phosphoserine mark is found at serine 64 and serine 85. Positions 105 to 137 (ADSDEEEYETSHISDTPVSLSSANDRESLTKKR) are disordered. Positions 115–127 (SHISDTPVSLSSA) are enriched in polar residues.

The protein to S.pombe SpCC613.14. In terms of assembly, component of the global genome repair (GGR) complex composed of at least ABF1, RAD7 and RAD16. Interacts with ELC1.

Component of the global genome repair (GGR) complex which promotes global genome nucleotide excision repair (GG-NER) which removes DNA damage from nontranscribing DNA. This protein is one of 10 proteins (RAD1, 2,3,4,7,10,14, 16,23 and MMS19) involved in excision repair of DNA damaged with UV light, bulky adducts, or cross-linking agents. The sequence is that of DNA repair protein RAD7 (RAD7) from Saccharomyces cerevisiae (strain ATCC 204508 / S288c) (Baker's yeast).